We begin with the raw amino-acid sequence, 417 residues long: Diaminopimelate decarboxylase (417 aa).

N6-(pyridoxal phosphate)lysine is present on Lys61. Pyridoxal 5'-phosphate contacts are provided by residues Gly240 and 275 to 278 (EPGR). Substrate is bound by residues Arg278, Arg314, and Tyr318. Residue Cys344 is the Proton donor of the active site. The substrate site is built by Glu345 and Tyr372. Position 372 (Tyr372) interacts with pyridoxal 5'-phosphate.

It belongs to the Orn/Lys/Arg decarboxylase class-II family. LysA subfamily. As to quaternary structure, homodimer. It depends on pyridoxal 5'-phosphate as a cofactor.

The enzyme catalyses meso-2,6-diaminopimelate + H(+) = L-lysine + CO2. Its pathway is amino-acid biosynthesis; L-lysine biosynthesis via DAP pathway; L-lysine from DL-2,6-diaminopimelate: step 1/1. Specifically catalyzes the decarboxylation of meso-diaminopimelate (meso-DAP) to L-lysine. In Vibrio cholerae serotype O1 (strain ATCC 39315 / El Tor Inaba N16961), this protein is Diaminopimelate decarboxylase (lysA).